A 214-amino-acid chain; its full sequence is Ribonuclease HII (214 aa).

The 189-residue stretch at 26–214 (EIVCGVDEAG…PVREAFDLIR (189 aa)) folds into the RNase H type-2 domain. 3 residues coordinate a divalent metal cation: Asp-32, Glu-33, and Asp-124.

It belongs to the RNase HII family. Mn(2+) is required as a cofactor. Mg(2+) serves as cofactor.

Its subcellular location is the cytoplasm. The catalysed reaction is Endonucleolytic cleavage to 5'-phosphomonoester.. In terms of biological role, endonuclease that specifically degrades the RNA of RNA-DNA hybrids. The sequence is that of Ribonuclease HII from Burkholderia mallei (strain NCTC 10247).